A 680-amino-acid chain; its full sequence is DNA-directed RNA polymerase subunit beta' (680 aa).

Residues C69, C71, C87, and C90 each coordinate Zn(2+). Residues D489, D491, and D493 each contribute to the Mg(2+) site.

Belongs to the RNA polymerase beta' chain family. RpoC1 subfamily. In plastids the minimal PEP RNA polymerase catalytic core is composed of four subunits: alpha, beta, beta', and beta''. When a (nuclear-encoded) sigma factor is associated with the core the holoenzyme is formed, which can initiate transcription. The cofactor is Mg(2+). Zn(2+) serves as cofactor.

Its subcellular location is the plastid. The protein localises to the chloroplast. It carries out the reaction RNA(n) + a ribonucleoside 5'-triphosphate = RNA(n+1) + diphosphate. DNA-dependent RNA polymerase catalyzes the transcription of DNA into RNA using the four ribonucleoside triphosphates as substrates. In Amborella trichopoda, this protein is DNA-directed RNA polymerase subunit beta'.